Consider the following 360-residue polypeptide: Serine/threonine-protein phosphatase 2A activator 2 (360 aa).

Belongs to the PTPA-type PPIase family.

Its subcellular location is the cytoplasm. It catalyses the reaction [protein]-peptidylproline (omega=180) = [protein]-peptidylproline (omega=0). In terms of biological role, PPIases accelerate the folding of proteins. It catalyzes the cis-trans isomerization of proline imidic peptide bonds in oligopeptides. Acts as a regulatory subunit for PP2A-like phosphatases modulating their activity or substrate specificity, probably by inducing a conformational change in the catalytic subunit, a direct target of the PPIase. Can reactivate inactive phosphatase PP2A-phosphatase methylesterase complexes (PP2Ai) in presence of ATP and Mg(2+) by dissociating the inactive form from the complex. The chain is Serine/threonine-protein phosphatase 2A activator 2 (RRD2) from Kluyveromyces lactis (strain ATCC 8585 / CBS 2359 / DSM 70799 / NBRC 1267 / NRRL Y-1140 / WM37) (Yeast).